The primary structure comprises 533 residues: Beta-glucosidase 22 (533 aa).

A signal peptide spans 1–24 (MAVSSSTSTCSSFSLLLLLLLLAA). N-linked (GlcNAc...) asparagine glycosylation is present at asparagine 41. A beta-D-glucoside-binding positions include glutamine 61, histidine 161, and 206–207 (DE). The Proton donor role is filled by glutamate 207. An intrachain disulfide couples cysteine 226 to cysteine 234. N-linked (GlcNAc...) asparagine glycans are attached at residues asparagine 233 and asparagine 238. A beta-D-glucoside-binding residues include tyrosine 350 and glutamate 421. Glutamate 421 functions as the Nucleophile in the catalytic mechanism. A glycan (N-linked (GlcNAc...) asparagine) is linked at asparagine 435. A beta-D-glucoside-binding residues include tryptophan 466 and phenylalanine 482.

Belongs to the glycosyl hydrolase 1 family.

The catalysed reaction is Hydrolysis of terminal, non-reducing beta-D-glucosyl residues with release of beta-D-glucose.. This chain is Beta-glucosidase 22 (BGLU22), found in Oryza sativa subsp. japonica (Rice).